The chain runs to 397 residues: Nuclear egress protein 2 (397 aa).

The Perinuclear space segment spans residues 1 to 358 (MEMNKVLHQD…GPSRPQSGPW (358 aa)). 2 disordered regions span residues 205–245 (RTAG…PPPP) and 291–332 (AAAG…PSLE). Serine 216 is subject to Phosphoserine. Low complexity-rich tracts occupy residues 224-239 (PSCSPTMVAAGGAAAG) and 291-301 (AAAGQDVGGSA). Basic residues predominate over residues 310–322 (SRRRGVSTHHRHP). A helical transmembrane segment spans residues 359 to 381 (LPARFATLGPLVLALLLVLALLW). Over 382–397 (RGHGQSSSPTRSAHRD) the chain is Nuclear.

Belongs to the herpesviridae NEC2 protein family. As to quaternary structure, forms a heterohexameric complex with NEC1. Interacts with host UBA7 and RNF170; this interaction promotes UBA7 proteasomal degradation. In terms of processing, phosphorylated. Phosphorylation by viral kinase UL97 at Ser-216 plays an important role for correct viral nuclear egress complex (NEC) localization.

The protein localises to the host nucleus inner membrane. Plays an essential role in virion nuclear egress, the first step of virion release from infected cell. Within the host nucleus, NEC1 interacts with the newly formed capsid through the vertexes and directs it to the inner nuclear membrane by associating with NEC2. Induces the budding of the capsid at the inner nuclear membrane as well as its envelopment into the perinuclear space. There, the NEC1/NEC2 complex promotes the fusion of the enveloped capsid with the outer nuclear membrane and the subsequent release of the viral capsid into the cytoplasm where it will reach the secondary budding sites in the host Golgi or trans-Golgi network. Inhibits host ISGylation and subsequent innate antiviral response by targeting host UBA7 for proteasomal degradation. In Human cytomegalovirus (strain AD169) (HHV-5), this protein is Nuclear egress protein 2.